The sequence spans 530 residues: V(D)J recombination-activating protein 2 (530 aa).

Residues 416 to 485 (WIKCCLSCQV…KYFCLDHGGL (70 aa)) form a PHD-type; atypical zinc finger. Zn(2+) is bound by residues C419, C423, C446, H453, H456, C459, C479, and H482.

The protein belongs to the RAG2 family. In terms of assembly, component of the RAG complex composed of core components rag1 and rag2.

Its subcellular location is the nucleus. In terms of biological role, core component of the RAG complex, a multiprotein complex that mediates the DNA cleavage phase during V(D)J recombination. V(D)J recombination assembles a diverse repertoire of immunoglobulin and T-cell receptor genes in developing B and T lymphocytes through rearrangement of different V (variable), in some cases D (diversity), and J (joining) gene segments. DNA cleavage by the RAG complex occurs in 2 steps: a first nick is introduced in the top strand immediately upstream of the heptamer, generating a 3'-hydroxyl group that can attack the phosphodiester bond on the opposite strand in a direct transesterification reaction, thereby creating 4 DNA ends: 2 hairpin coding ends and 2 blunt, 5'-phosphorylated ends. In the RAG complex, rag2 is not the catalytic component but is required for all known catalytic activities mediated by RAG1. It probably acts as a sensor of chromatin state that recruits the RAG complex to H3K4me3. The protein is V(D)J recombination-activating protein 2 (rag2) of Danio rerio (Zebrafish).